Consider the following 723-residue polypeptide: Malonamoyl-CoA synthetase vrtB (723 aa).

This sequence belongs to the ATP-dependent AMP-binding enzyme family.

Its pathway is secondary metabolite biosynthesis; terpenoid biosynthesis. Its function is as follows. Malonamoyl-CoA synthetase; part of the gene cluster that mediates the biosynthesis of viridicatumtoxin, a tetracycline-like fungal meroterpenoid with a unique, fused spirobicyclic ring system. The first step of the pathway is the production of the malonamoyl-CoA starter unit for the polyketide synthase vrtA. The aldolase vrtJ may be involved in the synthesis of the malonamate substrate for malonamoyl-CoA synthetase vrtB. The polyketide synthase vrtA then may utilize the malonamoyl-CoA starter unit, followed by sequential condensation of eight malonyl-CoA units to form the polyketide backbone. The cyclization of the last ring could be mediated by the lactamase-like protein vrtG. The proposed post-PKS tailoring steps are a hydroxylation at C5 catalyzed the cytochrome P450 monooxygenase vrtE, a hydroxylation at C12a catalyzed by VrtH and/or VrtI, and an O-methylation by the O-methyltransferase vrtF. VrtC is then proposed to catalyze the transfer of a geranyl group synthesized by vrtD to the aromatic C ring of the tetracyclic polyketide intermediate of viridicatumtoxin to yield previridicatumtoxin. Finally, the cytochrome P450 monooxygenase vrtK catalyzes the spirocyclization of the geranyl moiety of previridicatumtoxin to afford viridicatumtoxin. The sequence is that of Malonamoyl-CoA synthetase vrtB from Penicillium aethiopicum.